A 300-amino-acid chain; its full sequence is 2-methylisocitrate lyase (300 aa).

53 to 55 (SGD) is a substrate binding site. Positions 92 and 94 each coordinate Mg(2+). Residues 129-130 (CG), R162, E192, 214-216 (NMT), R245, and R274 contribute to the substrate site.

The protein belongs to the isocitrate lyase/PEP mutase superfamily. Methylisocitrate lyase family. Requires Mg(2+) as cofactor.

It catalyses the reaction 3-hydroxybutane-1,2,3-tricarboxylate = pyruvate + succinate. In terms of biological role, involved in the methylcitric acid cycle. Catalyzes the cleavage of 2-methylisocitrate to yield pyruvate and succinate. This is 2-methylisocitrate lyase from Halalkalibacterium halodurans (strain ATCC BAA-125 / DSM 18197 / FERM 7344 / JCM 9153 / C-125) (Bacillus halodurans).